The chain runs to 622 residues: Chaperone protein HscA homolog (622 aa).

Belongs to the heat shock protein 70 family.

Chaperone involved in the maturation of iron-sulfur cluster-containing proteins. Has a low intrinsic ATPase activity which is markedly stimulated by HscB. The sequence is that of Chaperone protein HscA homolog from Burkholderia lata (strain ATCC 17760 / DSM 23089 / LMG 22485 / NCIMB 9086 / R18194 / 383).